The chain runs to 1211 residues: DNA polymerase beta (1211 aa).

Tandem repeats lie at residues 1074 to 1077 (KPAG), 1078 to 1081 (KPAG), 1082 to 1085 (NPAG), and 1086 to 1089 (NPAG). The segment at 1074–1089 (KPAGKPAGNPAGNPAG) is 4 X 4 AA tandem repeats of [NK]-[P]-A-G.

It belongs to the DNA polymerase type-B family.

The enzyme catalyses DNA(n) + a 2'-deoxyribonucleoside 5'-triphosphate = DNA(n+1) + diphosphate. DNA-directed DNA polymerase involved in viral DNA replication. The chain is DNA polymerase beta (DPOL) from African swine fever virus (strain Badajoz 1971 Vero-adapted) (Ba71V).